The primary structure comprises 156 residues: 6,7-dimethyl-8-ribityllumazine synthase (156 aa).

5-amino-6-(D-ribitylamino)uracil-binding positions include phenylalanine 22, 57 to 59, and 81 to 83; these read AYE and TVI. Residue 86–87 coordinates (2S)-2-hydroxy-3-oxobutyl phosphate; it reads GT. The active-site Proton donor is the histidine 89. Residue phenylalanine 114 participates in 5-amino-6-(D-ribitylamino)uracil binding. Arginine 128 serves as a coordination point for (2S)-2-hydroxy-3-oxobutyl phosphate.

It belongs to the DMRL synthase family. Forms an icosahedral capsid composed of 60 subunits, arranged as a dodecamer of pentamers.

It catalyses the reaction (2S)-2-hydroxy-3-oxobutyl phosphate + 5-amino-6-(D-ribitylamino)uracil = 6,7-dimethyl-8-(1-D-ribityl)lumazine + phosphate + 2 H2O + H(+). It functions in the pathway cofactor biosynthesis; riboflavin biosynthesis; riboflavin from 2-hydroxy-3-oxobutyl phosphate and 5-amino-6-(D-ribitylamino)uracil: step 1/2. Catalyzes the formation of 6,7-dimethyl-8-ribityllumazine by condensation of 5-amino-6-(D-ribitylamino)uracil with 3,4-dihydroxy-2-butanone 4-phosphate. This is the penultimate step in the biosynthesis of riboflavin. This Mannheimia succiniciproducens (strain KCTC 0769BP / MBEL55E) protein is 6,7-dimethyl-8-ribityllumazine synthase.